We begin with the raw amino-acid sequence, 123 residues long: Small ribosomal subunit protein uS12 (123 aa).

Residue D89 is modified to 3-methylthioaspartic acid.

This sequence belongs to the universal ribosomal protein uS12 family. Part of the 30S ribosomal subunit. Contacts proteins S8 and S17. May interact with IF1 in the 30S initiation complex.

In terms of biological role, with S4 and S5 plays an important role in translational accuracy. Its function is as follows. Interacts with and stabilizes bases of the 16S rRNA that are involved in tRNA selection in the A site and with the mRNA backbone. Located at the interface of the 30S and 50S subunits, it traverses the body of the 30S subunit contacting proteins on the other side and probably holding the rRNA structure together. The combined cluster of proteins S8, S12 and S17 appears to hold together the shoulder and platform of the 30S subunit. The sequence is that of Small ribosomal subunit protein uS12 from Bartonella tribocorum (strain CIP 105476 / IBS 506).